A 964-amino-acid chain; its full sequence is Insulin receptor substrate 1 (964 aa).

The PH domain maps to 8–109 (GMALSGNLKK…WLDKLLVLQR (102 aa)). Positions 122-236 (YDQVWQVVIQ…SAMSAKTESN (115 aa)) constitute an IRS-type PTB domain. Positions 249–268 (LSHEPMRKRSSSANEASKPI) are disordered. Ser286, Ser287, and Ser342 each carry phosphoserine. Tyr410 is subject to Phosphotyrosine; by INSR. The YXXM motif 1 motif lies at 410 to 413 (YIPM). Positions 527 to 560 (ASNRSQSSIGKEGSSYGSSANRQKKSTSAPLLSL) are disordered. Residues 528–560 (SNRSQSSIGKEGSSYGSSANRQKKSTSAPLLSL) are compositionally biased toward polar residues. Position 554 is a phosphoserine (Ser554). The YXXM motif 2 signature appears at 640–643 (YLEM). Residues 698-712 (EKWREQPSRSEEKKS) show a composition bias toward basic and acidic residues. The interval 698-735 (EKWREQPSRSEEKKSNSPLNDNPFSLKPTNVESKSKSH) is disordered. The span at 713 to 729 (NSPLNDNPFSLKPTNVE) shows a compositional bias: polar residues. Tyr907 is modified (phosphotyrosine; by INSR). Positions 921 to 964 (AKYLKRGSRESPPVSACPEDGNTYARIDFDQSDSSSSSSNIFNT) are disordered. 2 positions are modified to phosphoserine: Ser928 and Ser931. Tyr944 bears the Phosphotyrosine; by INSR mark. The span at 952-964 (SDSSSSSSNIFNT) shows a compositional bias: low complexity.

Bindings to phosphatidylinositol 3-kinase and SHP2.

Activates phosphatidylinositol 3-kinase when bound to the regulatory p85 subunit. May mediate the control of various cellular processes by insulin-like peptides. When phosphorylated by the insulin receptor binds specifically to various cellular proteins containing SH2 domains. Involved in control of cell proliferation, cell size, and body and organ growth throughout development. Also has a role in a signaling pathway controlling the physiological response required to endure periods of low nutrient conditions. Insulin/insulin-like growth factor (IGF) signaling pathway has a role in regulating aging and is necessary in the ovary for vitellogenic maturation. The chain is Insulin receptor substrate 1 from Drosophila sechellia (Fruit fly).